Here is a 491-residue protein sequence, read N- to C-terminus: Dipeptide and tripeptide permease B (491 aa).

Over 1–26 (MNNTAPGLLHQPKPFFMIFFVELWER) the chain is Cytoplasmic. A helical membrane pass occupies residues 27–47 (FGYYGVQGILAVFFVKQLGFS). Residues 48–51 (QEQA) lie on the Periplasmic side of the membrane. The chain crosses the membrane as a helical span at residues 52–72 (FITFGAFAALVYGLISIGGYV). Residues 73–81 (GDHLLGTKR) lie on the Cytoplasmic side of the membrane. The helical transmembrane segment at 82 to 102 (TMVLGAIVLALGYFMTGMSLL) threads the bilayer. Topologically, residues 103 to 105 (KPE) are periplasmic. The helical transmembrane segment at 106-126 (MIFIALGTIAVGNGLFKANPA) threads the bilayer. The Cytoplasmic portion of the chain corresponds to 127-145 (SLLSKCYPPKDPRLDGAFT). The helical transmembrane segment at 146–166 (LFYMSINIGSLLSLSLAPIIA) threads the bilayer. Residues 167–171 (ERFGY) are Periplasmic-facing. The chain crosses the membrane as a helical span at residues 172-192 (AVTYNLCGLGLIIALLVYFAC). The Cytoplasmic portion of the chain corresponds to 193-210 (RGMVRSIGSAPDHQPLNY). Residues 211–231 (GKLLLVLAGAVVMIFLCAWLM) traverse the membrane as a helical segment. Residue H232 is a topological domain, periplasmic. Residues 233–253 (NVGVANIVLIAVSAVVLYFFF) traverse the membrane as a helical segment. The Cytoplasmic segment spans residues 254-266 (REAFKQDKTGRNR). A helical membrane pass occupies residues 267 to 287 (MFVAFILMIEAVLFYILYAQM). Residues 288–312 (PTSLNFFAINNVRHELLGFAINPVS) are Periplasmic-facing. Residues 313-335 (FQALNPFWVVVASPILASIYTRL) traverse the membrane as a helical segment. Residues 336–349 (GSRGRDMTMPTKFT) lie on the Cytoplasmic side of the membrane. A helical transmembrane segment spans residues 350-370 (LGMLLCSLGFLTAAAAGMWFA). The Periplasmic portion of the chain corresponds to 371–378 (DAQGLTSP). Residues 379-399 (WFVVLVYLFQSLGELMISALG) form a helical membrane-spanning segment. At 400-423 (LAMVAALVPQYLMGFILGMWFLTQ) the chain is on the cytoplasmic side. Residues 424–444 (AAAFLLGGYVATFTAVPAGIH) form a helical membrane-spanning segment. The Periplasmic portion of the chain corresponds to 445–454 (DPLQTLPIYT). The helical transmembrane segment at 455–475 (GVFGKIGIATLIVTLVMAAMV) threads the bilayer. Residues 476-491 (PWLNRMMNTPADGQKA) are Cytoplasmic-facing.

This sequence belongs to the major facilitator superfamily. Proton-dependent oligopeptide transporter (POT/PTR) (TC 2.A.17) family. DtpB subfamily.

The protein localises to the cell inner membrane. Proton-dependent permease that transports di- and tripeptides. In Edwardsiella piscicida, this protein is Dipeptide and tripeptide permease B.